A 283-amino-acid polypeptide reads, in one-letter code: Thymidylate synthase (283 aa).

Arg-22 is a dUMP binding site. Cys-160 (nucleophile) is an active-site residue. Residues 180 to 183, Asn-191, and 221 to 223 each bind dUMP; these read RSCD and HIY. Residue Asp-183 participates in (6R)-5,10-methylene-5,6,7,8-tetrahydrofolate binding. Position 282 (Ser-282) interacts with (6R)-5,10-methylene-5,6,7,8-tetrahydrofolate.

This sequence belongs to the thymidylate synthase family. Bacterial-type ThyA subfamily. Homodimer.

The protein localises to the cytoplasm. The catalysed reaction is dUMP + (6R)-5,10-methylene-5,6,7,8-tetrahydrofolate = 7,8-dihydrofolate + dTMP. Its pathway is pyrimidine metabolism; dTTP biosynthesis. In terms of biological role, catalyzes the reductive methylation of 2'-deoxyuridine-5'-monophosphate (dUMP) to 2'-deoxythymidine-5'-monophosphate (dTMP) while utilizing 5,10-methylenetetrahydrofolate (mTHF) as the methyl donor and reductant in the reaction, yielding dihydrofolate (DHF) as a by-product. This enzymatic reaction provides an intracellular de novo source of dTMP, an essential precursor for DNA biosynthesis. The protein is Thymidylate synthase of Shewanella halifaxensis (strain HAW-EB4).